A 114-amino-acid polypeptide reads, in one-letter code: UPF0145 protein STK_10800 (114 aa).

It belongs to the UPF0145 family.

This chain is UPF0145 protein STK_10800, found in Sulfurisphaera tokodaii (strain DSM 16993 / JCM 10545 / NBRC 100140 / 7) (Sulfolobus tokodaii).